The primary structure comprises 341 residues: tRNA N6-adenosine threonylcarbamoyltransferase (341 aa).

The Fe cation site is built by H113 and H117. Residues 136–140 (IISGG), D169, G182, and N280 contribute to the substrate site. Position 308 (D308) interacts with Fe cation.

Belongs to the KAE1 / TsaD family. Fe(2+) serves as cofactor.

The protein localises to the cytoplasm. It carries out the reaction L-threonylcarbamoyladenylate + adenosine(37) in tRNA = N(6)-L-threonylcarbamoyladenosine(37) in tRNA + AMP + H(+). In terms of biological role, required for the formation of a threonylcarbamoyl group on adenosine at position 37 (t(6)A37) in tRNAs that read codons beginning with adenine. Is involved in the transfer of the threonylcarbamoyl moiety of threonylcarbamoyl-AMP (TC-AMP) to the N6 group of A37, together with TsaE and TsaB. TsaD likely plays a direct catalytic role in this reaction. The protein is tRNA N6-adenosine threonylcarbamoyltransferase of Anaplasma marginale (strain St. Maries).